The sequence spans 68 residues: Large ribosomal subunit protein uL29 (68 aa).

Belongs to the universal ribosomal protein uL29 family.

In Bradyrhizobium sp. (strain BTAi1 / ATCC BAA-1182), this protein is Large ribosomal subunit protein uL29.